Reading from the N-terminus, the 352-residue chain is tRNA (guanine(26)-N(2))-dimethyltransferase (352 aa).

A Trm1 methyltransferase domain is found at 4 to 350; sequence ILNKEGAVEF…ANYDEIARIL (347 aa). Residues R39, R65, D83, D109, and A110 each coordinate S-adenosyl-L-methionine.

The protein belongs to the class I-like SAM-binding methyltransferase superfamily. Trm1 family.

It carries out the reaction guanosine(26) in tRNA + 2 S-adenosyl-L-methionine = N(2)-dimethylguanosine(26) in tRNA + 2 S-adenosyl-L-homocysteine + 2 H(+). Dimethylates a single guanine residue at position 26 of a number of tRNAs using S-adenosyl-L-methionine as donor of the methyl groups. The polypeptide is tRNA (guanine(26)-N(2))-dimethyltransferase (Pyrobaculum islandicum (strain DSM 4184 / JCM 9189 / GEO3)).